Here is a 256-residue protein sequence, read N- to C-terminus: Capsid protein (256 aa).

The Bipartite nuclear localization signal signature appears at 3 to 20; sequence KRPADIIISTPGSKVRRR. The short motif at 40–54 is the Nuclear localization signal element; that stretch reads KRQSWTNRPINRKPR. The segment at 68 to 85 is a zinc-finger region; sequence CEGPCKVQSFESRHDVVH. Positions 101-122 match the Nuclear export signal motif; sequence LTHRVGKRFCVKSIYILGKIWM. Residues 200-247 carry the Bipartite nuclear localization signal motif; sequence RRFFRVNNYVVYNQQEAGKYENHTENALMLYMACTHASNPVYATLKIR.

This sequence belongs to the geminiviridae capsid protein family. As to quaternary structure, homomultimer. Binds to single-stranded and double-stranded viral DNA. Interacts (via nuclear localization signals) with host importin alpha-1a.

The protein resides in the virion. The protein localises to the host nucleus. In terms of biological role, encapsidates the viral DNA into characteristic twinned ('geminate') particles. Binds the genomic viral ssDNA and shuttles it into and out of the cell nucleus. The CP of bipartite geminiviruses is not required for cell-to-cell or systemic movement. This Manihot esculenta (Cassava) protein is Capsid protein.